Here is a 571-residue protein sequence, read N- to C-terminus: Dual specificity testis-specific protein kinase 2 (571 aa).

Positions 58-313 (DFTCEKIGSG…EIGKTLEEIL (256 aa)) constitute a Protein kinase domain. Residues 64 to 72 (IGSGFFSEV) and lysine 87 contribute to the ATP site. Aspartate 176 functions as the Proton acceptor in the catalytic mechanism. Residue serine 219 is modified to Phosphoserine; by autocatalysis. Phosphoserine occurs at positions 369, 456, and 460. A disordered region spans residues 521–571 (ENGFGSRPQGTSPCPAGASEEMEVEERPAGSTPATFSTSGIGLQTQGKQDG). Polar residues predominate over residues 552–571 (TPATFSTSGIGLQTQGKQDG).

This sequence belongs to the protein kinase superfamily. TKL Ser/Thr protein kinase family. It depends on Mg(2+) as a cofactor. Mn(2+) is required as a cofactor. In terms of tissue distribution, predominantly expressed in testis and prostate. Found predominantly in non-germinal Sertoli cells.

The protein resides in the nucleus. It catalyses the reaction L-seryl-[protein] + ATP = O-phospho-L-seryl-[protein] + ADP + H(+). The catalysed reaction is L-threonyl-[protein] + ATP = O-phospho-L-threonyl-[protein] + ADP + H(+). The enzyme catalyses L-tyrosyl-[protein] + ATP = O-phospho-L-tyrosyl-[protein] + ADP + H(+). With respect to regulation, activated by autophosphorylation on Ser-219. Functionally, dual specificity protein kinase activity catalyzing autophosphorylation and phosphorylation of exogenous substrates on both serine/threonine and tyrosine residues. Phosphorylates cofilin at 'Ser-3'. May play an important role in spermatogenesis. The polypeptide is Dual specificity testis-specific protein kinase 2 (TESK2) (Homo sapiens (Human)).